A 149-amino-acid chain; its full sequence is 3-dehydroquinate dehydratase (149 aa).

The active-site Proton acceptor is Tyr21. The substrate site is built by Asn73, His79, and Asp86. Residue His99 is the Proton donor of the active site. Substrate contacts are provided by residues 100–101 and Arg110; that span reads LT.

This sequence belongs to the type-II 3-dehydroquinase family. Homododecamer.

The catalysed reaction is 3-dehydroquinate = 3-dehydroshikimate + H2O. It functions in the pathway metabolic intermediate biosynthesis; chorismate biosynthesis; chorismate from D-erythrose 4-phosphate and phosphoenolpyruvate: step 3/7. In terms of biological role, catalyzes a trans-dehydration via an enolate intermediate. The sequence is that of 3-dehydroquinate dehydratase from Thermus thermophilus (strain ATCC BAA-163 / DSM 7039 / HB27).